We begin with the raw amino-acid sequence, 560 residues long: Dihydroxy-acid dehydratase (560 aa).

The tract at residues 1 to 20 is disordered; that stretch reads MGDNLKKRSSMTTDGDNRAP. Cys-52 is a [2Fe-2S] cluster binding site. Position 84 (Asp-84) interacts with Mg(2+). Residue Cys-125 coordinates [2Fe-2S] cluster. 2 residues coordinate Mg(2+): Asp-126 and Lys-127. N6-carboxylysine is present on Lys-127. Cys-197 contacts [2Fe-2S] cluster. Glu-448 serves as a coordination point for Mg(2+). Ser-474 serves as the catalytic Proton acceptor.

This sequence belongs to the IlvD/Edd family. In terms of assembly, homodimer. [2Fe-2S] cluster serves as cofactor. Requires Mg(2+) as cofactor.

The enzyme catalyses (2R)-2,3-dihydroxy-3-methylbutanoate = 3-methyl-2-oxobutanoate + H2O. The catalysed reaction is (2R,3R)-2,3-dihydroxy-3-methylpentanoate = (S)-3-methyl-2-oxopentanoate + H2O. It participates in amino-acid biosynthesis; L-isoleucine biosynthesis; L-isoleucine from 2-oxobutanoate: step 3/4. The protein operates within amino-acid biosynthesis; L-valine biosynthesis; L-valine from pyruvate: step 3/4. Functionally, functions in the biosynthesis of branched-chain amino acids. Catalyzes the dehydration of (2R,3R)-2,3-dihydroxy-3-methylpentanoate (2,3-dihydroxy-3-methylvalerate) into 2-oxo-3-methylpentanoate (2-oxo-3-methylvalerate) and of (2R)-2,3-dihydroxy-3-methylbutanoate (2,3-dihydroxyisovalerate) into 2-oxo-3-methylbutanoate (2-oxoisovalerate), the penultimate precursor to L-isoleucine and L-valine, respectively. This Leptospira interrogans serogroup Icterohaemorrhagiae serovar Lai (strain 56601) protein is Dihydroxy-acid dehydratase.